Here is a 227-residue protein sequence, read N- to C-terminus: ATP synthase F(0) complex subunit a (227 aa).

The next 6 helical transmembrane spans lie at 14-34 (FLGI…FPSP), 69-89 (WAMI…LGLL), 98-118 (QLSM…LIGM), 139-159 (IPIL…ALGV), 165-185 (LTAG…MLSI), and 189-209 (IATL…AVAM).

The protein belongs to the ATPase A chain family. As to quaternary structure, component of the ATP synthase complex composed at least of ATP5F1A/subunit alpha, ATP5F1B/subunit beta, ATP5MC1/subunit c (homooctomer), MT-ATP6/subunit a, MT-ATP8/subunit 8, ATP5ME/subunit e, ATP5MF/subunit f, ATP5MG/subunit g, ATP5MK/subunit k, ATP5MJ/subunit j, ATP5F1C/subunit gamma, ATP5F1D/subunit delta, ATP5F1E/subunit epsilon, ATP5PF/subunit F6, ATP5PB/subunit b, ATP5PD/subunit d, ATP5PO/subunit OSCP. ATP synthase complex consists of a soluble F(1) head domain (subunits alpha(3) and beta(3)) - the catalytic core - and a membrane F(0) domain - the membrane proton channel (subunits c, a, 8, e, f, g, k and j). These two domains are linked by a central stalk (subunits gamma, delta, and epsilon) rotating inside the F1 region and a stationary peripheral stalk (subunits F6, b, d, and OSCP). Interacts with DNAJC30; interaction is direct.

Its subcellular location is the mitochondrion inner membrane. It carries out the reaction H(+)(in) = H(+)(out). Functionally, subunit a, of the mitochondrial membrane ATP synthase complex (F(1)F(0) ATP synthase or Complex V) that produces ATP from ADP in the presence of a proton gradient across the membrane which is generated by electron transport complexes of the respiratory chain. ATP synthase complex consist of a soluble F(1) head domain - the catalytic core - and a membrane F(1) domain - the membrane proton channel. These two domains are linked by a central stalk rotating inside the F(1) region and a stationary peripheral stalk. During catalysis, ATP synthesis in the catalytic domain of F(1) is coupled via a rotary mechanism of the central stalk subunits to proton translocation. With the subunit c (ATP5MC1), forms the proton-conducting channel in the F(0) domain, that contains two crucial half-channels (inlet and outlet) that facilitate proton movement from the mitochondrial intermembrane space (IMS) into the matrix. Protons are taken up via the inlet half-channel and released through the outlet half-channel, following a Grotthuss mechanism. The sequence is that of ATP synthase F(0) complex subunit a from Polypterus ornatipinnis (Ornate bichir).